The primary structure comprises 237 residues: Ribonuclease PH (237 aa).

Phosphate-binding positions include Arg86 and 124–126; that span reads GTR.

Belongs to the RNase PH family. As to quaternary structure, homohexameric ring arranged as a trimer of dimers.

It catalyses the reaction tRNA(n+1) + phosphate = tRNA(n) + a ribonucleoside 5'-diphosphate. Phosphorolytic 3'-5' exoribonuclease that plays an important role in tRNA 3'-end maturation. Removes nucleotide residues following the 3'-CCA terminus of tRNAs; can also add nucleotides to the ends of RNA molecules by using nucleoside diphosphates as substrates, but this may not be physiologically important. Probably plays a role in initiation of 16S rRNA degradation (leading to ribosome degradation) during starvation. The chain is Ribonuclease PH from Alteromonas mediterranea (strain DSM 17117 / CIP 110805 / LMG 28347 / Deep ecotype).